The following is a 677-amino-acid chain: Zinc finger CCCH domain-containing protein 23 (677 aa).

The disordered stretch occupies residues 66–117 (PPQAASSSPTVPAAHSPFLLSRQNSGRCPAPSPSSWAQAQPFSRSNSMGNGG). Over residues 69–82 (AASSSPTVPAAHSP) the composition is skewed to low complexity. Positions 98–113 (PSSWAQAQPFSRSNSM) are enriched in polar residues. A C3H1-type zinc finger spans residues 228–255 (GFGWKPCLYYARGFCKNGSTCRFVHGGL). The 77-residue stretch at 359 to 435 (RQIYLTFPAD…RVLVKPYKEK (77 aa)) folds into the RRM domain. The stretch at 480 to 513 (ANELMLRRKLEEQQQAAELQQAIDLHSRRLIGLQ) forms a coiled coil. The span at 535 to 562 (TPITNAFTSGQPGATTIVESPPSSTGQL) shows a compositional bias: polar residues. The interval 535–607 (TPITNAFTSG…EHNLPDSPFA (73 aa)) is disordered. A compositionally biased stretch (basic and acidic residues) spans 589 to 601 (RNADSDQSGEHNL).

The chain is Zinc finger CCCH domain-containing protein 23 from Oryza sativa subsp. japonica (Rice).